Here is a 94-residue protein sequence, read N- to C-terminus: Enhancer of yellow 2 transcription factor (94 aa).

It belongs to the ENY2 family. In terms of assembly, component of the nuclear pore complex (NPC)-associated AMEX complex (anchoring and mRNA export complex), composed of at least e(y)2 and xmas-2. Component of the SAGA transcription coactivator-HAT complexes, at least composed of Ada2b, e(y)2, Pcaf/Gcn5, Taf10 and Nipped-A/Trrap. Within the SAGA complex, e(y)2, Sgf11, and not/nonstop form an additional subcomplex of SAGA called the DUB module (deubiquitination module). Component of the THO complex, composed of at least e(y)2, HPR1, THO2, THOC5, THOC6 and THOC7. Interacts with e(y)1. Interacts with su(Hw) (via zinc fingers). Interacts with xmas-2; required for localization to the nuclear periphery. Interacts with the nuclear pore complex (NPC).

The protein localises to the nucleus. Its subcellular location is the nucleoplasm. It is found in the cytoplasm. Its function is as follows. Involved in mRNA export coupled transcription activation by association with both the AMEX and the SAGA complexes. The SAGA complex is a multiprotein complex that activates transcription by remodeling chromatin and mediating histone acetylation and deubiquitination. Within the SAGA complex, participates in a subcomplex that specifically deubiquitinates histone H2B. The SAGA complex is recruited to specific gene promoters by activators, where it is required for transcription. Required for nuclear receptor-mediated transactivation. Involved in transcription elongation by recruiting the THO complex onto nascent mRNA. The AMEX complex functions in docking export-competent ribonucleoprotein particles (mRNPs) to the nuclear entrance of the nuclear pore complex (nuclear basket). AMEX participates in mRNA export and accurate chromatin positioning in the nucleus by tethering genes to the nuclear periphery. The polypeptide is Enhancer of yellow 2 transcription factor (Drosophila grimshawi (Hawaiian fruit fly)).